We begin with the raw amino-acid sequence, 307 residues long: Ribonuclease Z (307 aa).

Zn(2+) contacts are provided by histidine 62, histidine 64, aspartate 66, histidine 67, histidine 139, aspartate 210, and histidine 268. The active-site Proton acceptor is aspartate 66.

Belongs to the RNase Z family. In terms of assembly, homodimer. Requires Zn(2+) as cofactor.

It carries out the reaction Endonucleolytic cleavage of RNA, removing extra 3' nucleotides from tRNA precursor, generating 3' termini of tRNAs. A 3'-hydroxy group is left at the tRNA terminus and a 5'-phosphoryl group is left at the trailer molecule.. In terms of biological role, zinc phosphodiesterase, which displays some tRNA 3'-processing endonuclease activity. Probably involved in tRNA maturation, by removing a 3'-trailer from precursor tRNA. This Myxococcus xanthus (strain DK1622) protein is Ribonuclease Z.